Here is a 205-residue protein sequence, read N- to C-terminus: MEGNGPAAVHYQPASPPRDACVYSSCYCEENIWKLCEYIKNHDQYPLEECYAVFISNERKMIPIWKQQARPGDGPVIWDYHVVLLHVSSGGQNFIYDLDTVLPFPCLFDTYVEDAFKSDDDIHPQFRRKFRVIRADSYLKNFASDRSHMKDSSGNWREPPPPYPCIETGDSKMNLNDFISMDPKVGWGAVYTLSEFTHRFGSKNC.

Residues Cys28, His81, and Asp97 contribute to the active site.

It belongs to the NTAQ1 family. As to quaternary structure, monomer.

It localises to the cytoplasm. The protein resides in the cytosol. Its subcellular location is the nucleus. The enzyme catalyses N-terminal L-glutaminyl-[protein] + H2O = N-terminal L-glutamyl-[protein] + NH4(+). In terms of biological role, mediates the side-chain deamidation of N-terminal glutamine residues to glutamate, an important step in N-end rule pathway of protein degradation. Conversion of the resulting N-terminal glutamine to glutamate renders the protein susceptible to arginylation, polyubiquitination and degradation as specified by the N-end rule. Does not act on substrates with internal or C-terminal glutamine and does not act on non-glutamine residues in any position. Does not deaminate acetylated N-terminal glutamine. With the exception of proline, all tested second-position residues on substrate peptides do not greatly influence the activity. In contrast, a proline at position 2, virtually abolishes deamidation of N-terminal glutamine. The protein is Protein N-terminal glutamine amidohydrolase of Homo sapiens (Human).